Consider the following 634-residue polypeptide: Phosphatase and actin regulator 2 (634 aa).

4 disordered regions span residues 1–32 (MDNAVDGLDKASIANSDGPTAGSQTPPFKRKG), 84–344 (LPDQ…PLED), 412–471 (PQLL…ALAS), and 485–508 (NRPSKKELEDKNILQRTSEEERQE). Residue D2 is the site of N-myristoyl glycine attachment. Residues 13–26 (IANSDGPTAGSQTP) are compositionally biased toward polar residues. At S16 the chain carries Phosphoserine. T25 bears the Phosphothreonine mark. Residues 60–85 (AVLERKISTRQSREELIRRGVLKELP) form an RPEL 1 repeat. Composition is skewed to basic and acidic residues over residues 108–120 (ESTREENVVKSEE) and 137–147 (EDKKENTENHS). Residues 153 to 162 (PALPPSAPPK) are compositionally biased toward pro residues. Composition is skewed to low complexity over residues 231-247 (GSKASASPSTSSTSSRP) and 276-290 (TSHLSSDTTTSGTSD). The span at 291–304 (LKGEPAETRVESFK) shows a compositional bias: basic and acidic residues. Pro residues predominate over residues 324–341 (VPPPPVAPAPSPLAPPLP). S423 bears the Phosphoserine mark. The segment covering 452-464 (TDDEDEDEDEDGS) has biased composition (acidic residues). 3 RPEL repeats span residues 477-502 (DTLAIKLGNRPSKKELEDKNILQRTS), 515-540 (TKLVRRLSQRPTTEELEQRNILKQKN), and 553-578 (RRLSRKLSLRPTVAELQARRILRFNE). Residues 488-508 (SKKELEDKNILQRTSEEERQE) are compositionally biased toward basic and acidic residues. Residues S522 and S560 each carry the phosphoserine modification.

Belongs to the phosphatase and actin regulator family. In terms of assembly, binds PPP1CA and actin.

It localises to the membrane. The sequence is that of Phosphatase and actin regulator 2 (PHACTR2) from Homo sapiens (Human).